Here is a 434-residue protein sequence, read N- to C-terminus: Mitochondrial distribution and morphology protein 10 (434 aa).

It belongs to the MDM10 family. Component of the ER-mitochondria encounter structure (ERMES) or MDM complex, composed of mmm1, mdm10, mdm12 and mdm34. Associates with the mitochondrial outer membrane sorting assembly machinery SAM(core) complex.

It localises to the mitochondrion outer membrane. In terms of biological role, component of the ERMES/MDM complex, which serves as a molecular tether to connect the endoplasmic reticulum and mitochondria. Components of this complex are involved in the control of mitochondrial shape and protein biogenesis and may function in phospholipid exchange. mdm10 is involved in the late assembly steps of the general translocase of the mitochondrial outer membrane (TOM complex). Functions in the tom40-specific route of the assembly of outer membrane beta-barrel proteins, including the association of tom40 with the receptor tom22 and small TOM proteins. Can associate with the SAM(core) complex as well as the mdm12-mmm1 complex, both involved in late steps of the major beta-barrel assembly pathway, that is responsible for biogenesis of all outer membrane beta-barrel proteins. May act as a switch that shuttles between both complexes and channels precursor proteins into the tom40-specific pathway. Plays a role in mitochondrial morphology and in the inheritance of mitochondria. This is Mitochondrial distribution and morphology protein 10 (mdmB) from Aspergillus niger (strain ATCC MYA-4892 / CBS 513.88 / FGSC A1513).